The sequence spans 501 residues: Cytochrome P450 71B3 (501 aa).

The helical transmembrane segment at 2–22 (SILLYFFFLPVILSLIFMKKF) threads the bilayer. Cysteine 445 is a heme binding site.

This sequence belongs to the cytochrome P450 family. It depends on heme as a cofactor.

It is found in the membrane. In Arabidopsis thaliana (Mouse-ear cress), this protein is Cytochrome P450 71B3 (CYP71B3).